A 1205-amino-acid polypeptide reads, in one-letter code: MNTNNIKKYAPQARNDFRDAVIQKLTTLGIAADKKGNLQIAEAETIGETVRYGQFDYPLSTLPRRERLVKRAREQGFEVLVEHCAYTWFNRLCAIRYMELHGYLDHGFRMLSHPETPTAFEVLDHVPEVAEALLPESKAQLVEMKLSGNQDEALYRELLLGQCHALHHAMPFLFEAVDDEAELLLPDNLTRTDSILRGLVDDIPEEDWEQVEVIGWLYQFYISEKKDAVIGKVVKSEDIPAATQLFTPNWIVQYLVQNSVGRQWLQTYPDSPLKDKMEYYIEPAEQTPEVQAQLAAITPASIEPESIKVLDPACGSGHILTEAYNVLKAIYEERGYRTRDIPQLILENNIFGLDIDDRAAQLSGFAMLMLARQDDRRILGRGVRLNIVSLQESKLDIAEVWTKLNFHQHMQRGSMGDMFTQGTALANTDSAEYKLLMRTLALFTSAKTLGSLIQVPQEDEAALKAFLERLYRLAVEGDIQQKEAAAELIPYIQQAWILAQRYDAVVANPPYMGGKGMNGDLKEFAKKQFPDSKSDLFAMFMQHAFSLLKENGFNAQVNMQSWMFLSSYEALRGWLLDNKTFITMAHLGARAFGQISGEVVQTTAWVIKNNHSGFYKPVFFRLVDDNEEHKKNNLLNRMNCFKNTLQNDFKKIPGSPIAYWATLAFINSFLKLPALGTRAVKGLDTNGSIDVFLRRWPEVSINSFDALGKGNSKWFPIAKGGELRKWFGNHEYIINYENDGIELRKNKANLRNKDMYFQEGGTWTVVSTTGFSMRYMPKGFLFDQGGSAVFCENNDELSIYNILACMNSKYINYSASLICPTLNFTTGDVRKFPVIKNNHLEDLAKKAIEISKADWNQFETSWEFSKNKLIEHKGNVAYSYASYCNFQDKLYEQLVNIEKNINNIIEEILGFKIETTENSELITLNSNKIYRYGQSETNDTFLNRHRSDTISELISYSVGCQMGRYSLDREGLVYAHEGNKGFAELAAEGAYKTFPADNDGILPLMDDEWFEDDVTSRVKEFVRTVWGEEHLQENLEFIAESLCLYAIKPKKGESALETIRRYLSTQFWKDHMKMYKKRPIYWLFSSGKEKAFECLVYLHRYNDATLSRMRTEYVVPLLARYQANIDRLNDQLDEASGGEATRLKRERDSLIKKFSELRSYDDRLRHYADMRISIDLDDGVKVNYGKFGDLLADVKAITGNAPEAI.

It belongs to the methyltransferase superfamily. PglX adenine methyltransferase family. As to quaternary structure, (Microbial infection) Interacts with phage T7 protein Ocr (AC P03775, gene 0.3) during an infection and when the protein is expressed from a plasmid; this interaction inhibits the enzymatic activity of PglX/BrxX through high-affinity binding. Forms a 2:2 tetrameric complex with phage T7 OCR.

The catalysed reaction is a 2'-deoxyadenosine in DNA + S-adenosyl-L-methionine = an N(6)-methyl-2'-deoxyadenosine in DNA + S-adenosyl-L-homocysteine + H(+). (Microbial infection) Methyltransferase activity is inhibited by phage T7 protein OCR (AC P03775, gene 0.3). Viability of cells overexpressing OCR is unaffected. In terms of biological role, BREX systems (bacteriophage exclusion) provide immunity against bacteriophage. Part of a type 1 BREX system which protects against dsDNA phage. This system allows phage adsorption but prevents phage DNA replication, without degradation of the phage DNA. Methylation of bacterial DNA by this protein guides self/non-self discrimination. When the brxA-brxB-brxC-pglX-pglZ-brxL genes are transformed into a susceptible E.coli strain (BW25113) they confer very high resistance to infection by bacteriophage VR7 and VpaE1, about 100-fold protection against lambda, T5 and T7 (probably with a mutated 0.3 gene) and no protection against RNA phage Qbeta, ssDNA phage M13 or dSDNA phage T4 and VR5. Glycosylated phage DNA is not susceptible to BREX. The BREX system does not confer resistance to lysogenic lambda phage, i.e. prophage that are integrated into the chromosomal DNA and then induced to form phage. Its function is as follows. Methylates the adenine in the fifth position of the hexamer 5'-GGTAAG-3' in genomic DNA; methylates the same sequence in the few phage that escape the BREX system. Methylated phage are now resistant to BREX, showing immunity is provided by an epigenetic modification. Expression of this protein alone has no effect on phage infection, does not lead to methylated DNA and mildly inhibits growth. In Escherichia coli O9:H4 (strain HS), this protein is Adenine-specific methyltransferase BrxX (pglX).